A 486-amino-acid chain; its full sequence is Aromatic-L-amino-acid decarboxylase (486 aa).

Met1 carries the post-translational modification N-acetylmethionine. A run of 2 repeats spans residues 58 to 115 (QDVE…TELE) and 118 to 178 (MMDW…TQGA). The 2 X approximate tandem repeats stretch occupies residues 58–178 (QDVEKIIMPG…AASPGLTQGA (121 aa)). Position 82 (Thr82) interacts with substrate. Pyridoxal 5'-phosphate contacts are provided by Ala148 and Ser149. His192 serves as a coordination point for substrate. 2 residues coordinate pyridoxal 5'-phosphate: Thr246 and Asn300. Position 303 is an N6-(pyridoxal phosphate)lysine (Lys303).

It belongs to the group II decarboxylase family. As to quaternary structure, homodimer. It depends on pyridoxal 5'-phosphate as a cofactor.

The enzyme catalyses L-dopa + H(+) = dopamine + CO2. The catalysed reaction is 5-hydroxy-L-tryptophan + H(+) = serotonin + CO2. The protein operates within catecholamine biosynthesis; dopamine biosynthesis; dopamine from L-tyrosine: step 2/2. Its function is as follows. Catalyzes the decarboxylation of L-3,4-dihydroxyphenylalanine (DOPA) to dopamine and L-5-hydroxytryptophan to serotonin. This Sus scrofa (Pig) protein is Aromatic-L-amino-acid decarboxylase (DDC).